Reading from the N-terminus, the 230-residue chain is Small ribosomal subunit protein uS3 (230 aa).

The 69-residue stretch at 39 to 107 folds into the KH type-2 domain; that stretch reads VREYLFKRLK…PVHINIEEVR (69 aa).

This sequence belongs to the universal ribosomal protein uS3 family. In terms of assembly, part of the 30S ribosomal subunit. Forms a tight complex with proteins S10 and S14.

Its function is as follows. Binds the lower part of the 30S subunit head. Binds mRNA in the 70S ribosome, positioning it for translation. The sequence is that of Small ribosomal subunit protein uS3 from Alcanivorax borkumensis (strain ATCC 700651 / DSM 11573 / NCIMB 13689 / SK2).